Reading from the N-terminus, the 184-residue chain is ADP-ribosylation factor-like protein 2 (184 aa).

The N-myristoyl glycine moiety is linked to residue Gly-2. Residues 23–30 (GLDNAGKT), 66–70 (DVGGQ), and 125–128 (NKQD) each bind GTP.

This sequence belongs to the small GTPase superfamily. Arf family. As to expression, ubiquitously expressed.

Functionally, GTP-binding protein involved in protein trafficking; may modulate vesicle budding and uncoating within the Golgi apparatus. This chain is ADP-ribosylation factor-like protein 2 (Arl2), found in Drosophila melanogaster (Fruit fly).